The following is a 233-amino-acid chain: Cysteine-rich venom protein (233 aa).

The first 12 residues, 1 to 12, serve as a signal peptide directing secretion; the sequence is PILAAVLQQSSG. Positions 31–159 constitute an SCP domain; the sequence is VDLHNSLRRS…PYSYFFVCQY (129 aa). Cystine bridges form between Cys-68–Cys-146, Cys-85–Cys-160, Cys-141–Cys-157, Cys-179–Cys-186, Cys-182–Cys-191, Cys-195–Cys-228, Cys-204–Cys-222, and Cys-213–Cys-226. Residues 195 to 228 form the ShKT domain; sequence CTRENKFTNCNTMVQQSSCQDNYMKTNCPASCFC.

Belongs to the CRISP family. In terms of tissue distribution, expressed by the venom gland.

The protein resides in the secreted. Functionally, blocks contraction of smooth muscle elicited by high potassium-induced depolarization, but does not block caffeine-stimulated contraction. May target voltage-gated calcium channels on smooth muscle. This chain is Cysteine-rich venom protein, found in Trimeresurus stejnegeri (Chinese green tree viper).